We begin with the raw amino-acid sequence, 274 residues long: tRNA (guanine-N(7)-)-methyltransferase (274 aa).

Residues 16 to 40 (ASASRGAATGSRGVAPAVPRGGAPA) form a disordered region. Positions 106, 131, 158, and 181 each coordinate S-adenosyl-L-methionine. Aspartate 181 is an active-site residue. Substrate-binding positions include lysine 185, aspartate 217, and 252–255 (TKFE).

It belongs to the class I-like SAM-binding methyltransferase superfamily. TrmB family.

The enzyme catalyses guanosine(46) in tRNA + S-adenosyl-L-methionine = N(7)-methylguanosine(46) in tRNA + S-adenosyl-L-homocysteine. The protein operates within tRNA modification; N(7)-methylguanine-tRNA biosynthesis. Its function is as follows. Catalyzes the formation of N(7)-methylguanine at position 46 (m7G46) in tRNA. This chain is tRNA (guanine-N(7)-)-methyltransferase, found in Verminephrobacter eiseniae (strain EF01-2).